A 175-amino-acid polypeptide reads, in one-letter code: Myosin regulatory light chain 2, atrial isoform (175 aa).

Ala-2 carries the post-translational modification N-acetylalanine. Phosphoserine is present on residues Ser-22 and Ser-23. 3 consecutive EF-hand domains span residues Ala-32–Val-67, Asp-102–Lys-137, and Phe-138–Lys-173. Residues Asp-45, Asn-47, Asp-49, and Asp-56 each coordinate Ca(2+).

In terms of assembly, myosin is a hexamer of 2 heavy chains and 4 light chains.

This chain is Myosin regulatory light chain 2, atrial isoform (MYL7), found in Sus scrofa (Pig).